The chain runs to 608 residues: FAD-binding monooxygenase ktnD (608 aa).

The N-linked (GlcNAc...) asparagine glycan is linked to asparagine 4. Residues 17–37 traverse the membrane as a helical segment; it reads ATVVIIGAGVSGMCMAIDLLH. FAD contacts are provided by residues 56-59, 68-69, and tyrosine 74; these read TWAN and DV. Position 66–68 (66–68) interacts with NADP(+); the sequence is ASD. N-linked (GlcNAc...) asparagine glycosylation is present at asparagine 114. NADP(+)-binding positions include 201–207 and 224–225; these read NGASAIQ and RS. An N-linked (GlcNAc...) asparagine glycan is attached at asparagine 325. The chain crosses the membrane as a helical span at residues 535 to 555; sequence ALVSNVTLFLGVALAAGGVYW.

This sequence belongs to the FAD-binding monooxygenase family. The cofactor is FAD.

It is found in the membrane. Its function is as follows. Non-reducing polyketide synthase; part of the gene cluster that mediates the biosynthesis of the bicoumarin kotanin. The non-reducing polyketide synthase ktnS first catalyzes the formation of the pentaketidic 4,7-dihydroxy-5-methylcoumarin from acetyl coenzyme A and 4 malonyl coenzyme A molecules. Further O-methylation by ktnB leads to the formation of 7-demethylsiderin. Then, an oxidative phenol coupling catalyzed by the cytochrome P450 monooxygenase ktnC forms the 8,8'-dimer P-orlandin via dimerization the monomeric precursor, 7-demethylsiderin. P-orlandin is subsequently O-methylated in a stepwise fashion to demethylkotanin and kotanin. The function of ktnD within the pathway has not been determined yet. The polypeptide is FAD-binding monooxygenase ktnD (Aspergillus niger (strain ATCC MYA-4892 / CBS 513.88 / FGSC A1513)).